The primary structure comprises 510 residues: Bifunctional pantoate ligase/cytidylate kinase (510 aa).

The tract at residues 1–276 is pantoate--beta-alanine ligase; it reads MKKVIIRKTE…CGETRLIDHV (276 aa). 29–36 serves as a coordination point for ATP; it reads MGNLHDGH. H36 (proton donor) is an active-site residue. Position 61 (Q61) interacts with (R)-pantoate. Q61 is a binding site for beta-alanine. ATP is bound at residue 150–153; the sequence is GEKD. Q156 contributes to the (R)-pantoate binding site. 187–190 is an ATP binding site; the sequence is LSSR. Positions 277 to 510 are cytidylate kinase; the sequence is FLMKRRPIIA…DRIPKETEIK (234 aa).

It in the N-terminal section; belongs to the pantothenate synthetase family. In the C-terminal section; belongs to the cytidylate kinase family. Type 1 subfamily.

It is found in the cytoplasm. It catalyses the reaction (R)-pantoate + beta-alanine + ATP = (R)-pantothenate + AMP + diphosphate + H(+). It carries out the reaction CMP + ATP = CDP + ADP. The catalysed reaction is dCMP + ATP = dCDP + ADP. The protein operates within cofactor biosynthesis; (R)-pantothenate biosynthesis; (R)-pantothenate from (R)-pantoate and beta-alanine: step 1/1. Its function is as follows. Catalyzes the condensation of pantoate with beta-alanine in an ATP-dependent reaction via a pantoyl-adenylate intermediate. Catalyzes the transfer of a phosphate group from ATP to either CMP or dCMP to form CDP or dCDP and ADP, respectively. The chain is Bifunctional pantoate ligase/cytidylate kinase from Prochlorococcus marinus (strain MIT 9301).